The chain runs to 715 residues: Eosinophil peroxidase (715 aa).

An N-terminal signal peptide occupies residues 1 to 17; it reads MHLLPALAGVLATLVLA. Residues 18 to 139 constitute a propeptide that is removed on maturation; it reads QPCEGTDPAS…SGCALRDQAE (122 aa). N-linked (GlcNAc...) asparagine glycans are attached at residues Asn-52 and Asn-113. A disulfide bridge connects residues Cys-141 and Cys-152. Asp-232 lines the heme b pocket. His-233 serves as the catalytic Proton acceptor. Residue Asp-234 coordinates Ca(2+). 2 disulfides stabilise this stretch: Cys-253–Cys-263 and Cys-257–Cys-281. Residues Thr-306, Phe-308, Asp-310, and Ser-312 each coordinate Ca(2+). N-linked (GlcNAc...) asparagine glycosylation is found at Asn-327 and Asn-363. An intrachain disulfide couples Cys-359 to Cys-370. Heme b contacts are provided by Glu-380 and His-474. The residue at position 488 (Tyr-488) is a 3'-nitrotyrosine. Cystine bridges form between Cys-578-Cys-635 and Cys-676-Cys-701. Asn-700 and Asn-708 each carry an N-linked (GlcNAc...) asparagine glycan.

Belongs to the peroxidase family. XPO subfamily. Tetramer of two light chains and two heavy chains. The cofactor is Ca(2+). Heme b is required as a cofactor.

The protein localises to the cytoplasmic granule. The catalysed reaction is 2 a phenolic donor + H2O2 = 2 a phenolic radical donor + 2 H2O. In terms of biological role, mediates tyrosine nitration of secondary granule proteins in mature resting eosinophils. Shows significant inhibitory activity towards Mycobacterium tuberculosis H37Rv by inducing bacterial fragmentation and lysis. The chain is Eosinophil peroxidase (EPX) from Homo sapiens (Human).